The chain runs to 450 residues: NADH-quinone oxidoreductase subunit H (450 aa).

The next 9 membrane-spanning stretches (helical) occupy residues 18–38 (WWLV…TPLL), 91–111 (ILAP…IPFG), 128–148 (LPVA…GIVL), 169–189 (VISY…DAGT), 201–221 (HTWY…SMVG), 262–282 (VTVS…PFPL), 292–312 (WWPV…FVWL), 324–344 (FMGL…MIVA), and 358–378 (SIAL…LLWK). The disordered stretch occupies residues 387–450 (APEKPVEPRG…TGPTQENSDD (64 aa)). The segment covering 390–400 (KPVEPRGRAEL) has biased composition (basic and acidic residues). Over residues 433-450 (VSVTGAHSTGPTQENSDD) the composition is skewed to polar residues.

Belongs to the complex I subunit 1 family. In terms of assembly, NDH-1 is composed of 14 different subunits. Subunits NuoA, H, J, K, L, M, N constitute the membrane sector of the complex.

It localises to the cell membrane. It catalyses the reaction a quinone + NADH + 5 H(+)(in) = a quinol + NAD(+) + 4 H(+)(out). NDH-1 shuttles electrons from NADH, via FMN and iron-sulfur (Fe-S) centers, to quinones in the respiratory chain. The immediate electron acceptor for the enzyme in this species is believed to be ubiquinone. Couples the redox reaction to proton translocation (for every two electrons transferred, four hydrogen ions are translocated across the cytoplasmic membrane), and thus conserves the redox energy in a proton gradient. This subunit may bind ubiquinone. In Rhodococcus jostii (strain RHA1), this protein is NADH-quinone oxidoreductase subunit H.